A 145-amino-acid chain; its full sequence is Peptide methionine sulfoxide reductase MsrB (145 aa).

Residues 4–127 (SDELKQRIGE…NSAALKFIPY (124 aa)) form the MsrB domain. The active-site Nucleophile is cysteine 116.

This sequence belongs to the MsrB Met sulfoxide reductase family.

The catalysed reaction is L-methionyl-[protein] + [thioredoxin]-disulfide + H2O = L-methionyl-(R)-S-oxide-[protein] + [thioredoxin]-dithiol. The polypeptide is Peptide methionine sulfoxide reductase MsrB (Streptococcus pyogenes serotype M3 (strain ATCC BAA-595 / MGAS315)).